The following is a 182-amino-acid chain: Dephospho-CoA kinase (182 aa).

The region spanning 4–182 is the DPCK domain; the sequence is VVAITGGIGS…IINNDHKIMT (179 aa). 12–17 is a binding site for ATP; the sequence is GSGKTT.

It belongs to the CoaE family.

Its subcellular location is the cytoplasm. It catalyses the reaction 3'-dephospho-CoA + ATP = ADP + CoA + H(+). It functions in the pathway cofactor biosynthesis; coenzyme A biosynthesis; CoA from (R)-pantothenate: step 5/5. In terms of biological role, catalyzes the phosphorylation of the 3'-hydroxyl group of dephosphocoenzyme A to form coenzyme A. This Aliivibrio fischeri (strain ATCC 700601 / ES114) (Vibrio fischeri) protein is Dephospho-CoA kinase.